The chain runs to 213 residues: 3,4-dihydroxy-2-butanone 4-phosphate synthase (213 aa).

Residues arginine 37–glutamate 38, aspartate 42, arginine 150–threonine 154, and glutamate 174 contribute to the D-ribulose 5-phosphate site. Glutamate 38 contacts Mg(2+). Residue histidine 153 coordinates Mg(2+).

It belongs to the DHBP synthase family. In terms of assembly, homodimer. Requires Mg(2+) as cofactor. The cofactor is Mn(2+).

The catalysed reaction is D-ribulose 5-phosphate = (2S)-2-hydroxy-3-oxobutyl phosphate + formate + H(+). It functions in the pathway cofactor biosynthesis; riboflavin biosynthesis; 2-hydroxy-3-oxobutyl phosphate from D-ribulose 5-phosphate: step 1/1. Catalyzes the conversion of D-ribulose 5-phosphate to formate and 3,4-dihydroxy-2-butanone 4-phosphate. This Buchnera aphidicola subsp. Schizaphis graminum (strain Sg) protein is 3,4-dihydroxy-2-butanone 4-phosphate synthase.